The chain runs to 400 residues: ATP phosphoribosyltransferase regulatory subunit (400 aa).

Belongs to the class-II aminoacyl-tRNA synthetase family. HisZ subfamily. As to quaternary structure, heteromultimer composed of HisG and HisZ subunits.

It localises to the cytoplasm. Its pathway is amino-acid biosynthesis; L-histidine biosynthesis; L-histidine from 5-phospho-alpha-D-ribose 1-diphosphate: step 1/9. Functionally, required for the first step of histidine biosynthesis. May allow the feedback regulation of ATP phosphoribosyltransferase activity by histidine. The chain is ATP phosphoribosyltransferase regulatory subunit from Hahella chejuensis (strain KCTC 2396).